The following is a 215-amino-acid chain: MLQVYLVRHGETQWNAERRIQGQSDSPLTAKGEQQAMQVGERARSLSITHIISSDLGRTKRTAEIIAQACGCDITFDSRLRELDMGVLEKRQIDSLTEEEEGWRRQLVNGTQDGRIPGGESMQELSDRVHAALASCLELPQGSRPLLVSHGIALGCLVSTILGLPAWAERRLRLRNCSISRIDYQESQWLASGWVVETAGDVSHLDAPALDELQR.

Substrate-binding positions include 8 to 15 (RHGETQWN), 21 to 22 (QG), arginine 58, lysine 60, 82 to 85 (ELDM), 104 to 105 (RR), and 151 to 152 (GI). Histidine 9 acts as the Tele-phosphohistidine intermediate in catalysis. Catalysis depends on glutamate 82, which acts as the Proton donor/acceptor.

This sequence belongs to the phosphoglycerate mutase family. GpmB subfamily.

It catalyses the reaction (2R)-2-phosphoglycerate = (2R)-3-phosphoglycerate. It functions in the pathway carbohydrate degradation; glycolysis; pyruvate from D-glyceraldehyde 3-phosphate: step 3/5. This Salmonella choleraesuis (strain SC-B67) protein is Probable phosphoglycerate mutase GpmB.